A 580-amino-acid chain; its full sequence is 9,13-epoxylabda-14-ene synthase, chloroplastic (580 aa).

Residues methionine 1–threonine 32 constitute a chloroplast transit peptide. 5 residues coordinate Mg(2+): aspartate 322, aspartate 326, asparagine 466, threonine 470, and glutamate 474. A DDXXD motif motif is present at residues aspartate 322–aspartate 326.

This sequence belongs to the terpene synthase family. The cofactor is Mg(2+). In terms of tissue distribution, present in both leaves and flowers, with higher levels in leaves.

It localises to the plastid. The protein localises to the chloroplast. It catalyses the reaction peregrinol diphosphate = (13R)-9,13-epoxylabd-14-ene + diphosphate. It carries out the reaction (+)-copalyl diphosphate = miltiradiene + diphosphate. The enzyme catalyses 8-hydroxycopalyl diphosphate = (13R)-manoyl oxide + diphosphate. It participates in secondary metabolite biosynthesis; terpenoid biosynthesis. In terms of biological role, involved in the biosynthesis of labdane-type diterpenoid including marrubiin and other labdane-related furanoid diterpenoids with potential applications as anti-diabetics, analgesics or vasorelaxants. Terpene synthase the catalyzes the conversion of peregrinol diphosphate to 9,13(R)-epoxy-labd-14-ene, from (+)-copalyl diphosphate ((+)-CPP) to miltiradiene and from 8-hydroxycopalyl diphosphate (LPP, labda-13-en-8-ol diphosphate) to manoyl oxide. This Marrubium vulgare (White horehound) protein is 9,13-epoxylabda-14-ene synthase, chloroplastic.